The chain runs to 506 residues: 5-OH-xanthotoxin synthase (506 aa).

Residues 3-23 traverse the membrane as a helical segment; sequence PVVIFLVLAFPIASVYLLFYH. Residues 365–370 form a substrate specificity region; the sequence is TGPLLI. Cys446 lines the heme pocket.

Belongs to the cytochrome P450 family. The cofactor is heme.

The protein localises to the microsome membrane. It carries out the reaction xanthotoxin + reduced [NADPH--hemoprotein reductase] + O2 = 5-hydroxyxanthotoxin + oxidized [NADPH--hemoprotein reductase] + H2O + 2 H(+). The protein operates within secondary metabolite biosynthesis. Its function is as follows. Involved in the biosynthesis of coumarins and furanocoumarins (FCs), natural products required for defense responses against attacks by predators with potential medical and agroindustrial usages such as anticoagulant, rodenticide and artificial vanilla substitutes. Catalyzes the conversion of xanthotoxin into 5-hydroxyxanthotoxin. The sequence is that of 5-OH-xanthotoxin synthase from Pastinaca sativa (Wild parsnip).